The following is a 516-amino-acid chain: Glycosyltransferase-like protein gnt15 (516 aa).

Topologically, residues 1-24 are cytoplasmic; that stretch reads MSNFYNNNPRRNTFRLTERIKKKP. The chain crosses the membrane as a helical; Signal-anchor for type II membrane protein span at residues 25–45; that stretch reads YQTLIVFILIFLFLYVFGPFG. At 46 to 516 the chain is on the extracellular side; that stretch reads EKKSNNNNNN…NDNCLTREHW (471 aa). An N-linked (GlcNAc...) asparagine glycan is attached at asparagine 152. Residues 199-250 are disordered; it reads DTSNNNNNNNNNNNNNNNNNNNNNNNNNNNNNNNENNDNDNGNNNNNNDNEK. The span at 202–246 shows a compositional bias: low complexity; it reads NNNNNNNNNNNNNNNNNNNNNNNNNNNNNNNENNDNDNGNNNNNN. Residues asparagine 386 and asparagine 412 are each glycosylated (N-linked (GlcNAc...) asparagine).

This sequence belongs to the glycosyltransferase 8 family. Highly divergent.

The protein localises to the membrane. Functionally, may have a role in modulating cell adhesion and glycosylation. Essential for development. This is Glycosyltransferase-like protein gnt15 (gnt15) from Dictyostelium discoideum (Social amoeba).